Consider the following 327-residue polypeptide: F-box/LRR-repeat protein At3g58900 (327 aa).

Residues 1–47 (MDLFSSLPNELLYHILSFLSTKEAALTSVLSKRWRNLFAFVPYLEFD) enclose the F-box domain. LRR repeat units lie at residues 116–144 (DLFIDFRDLYSLPHEVGVSRTLVVLRVGS), 161–192 (KTLVLDSCWLCIGQFQILLLACPALEELDMTN), 199–230 (NVTVSSSILKELTIDLHGCCSVVNLKSLSFDA), 235–261 (YFYYCDSLAEDYPQVNLKNLVEAQINL), and 277–308 (EMLVADDVFPGLGNAWKLITGLRNVQQLYLSP).

The protein is F-box/LRR-repeat protein At3g58900 of Arabidopsis thaliana (Mouse-ear cress).